The primary structure comprises 66 residues: Putative alpha-neurotoxin RjAa16 (66 aa).

The 60-residue stretch at 1–60 (KEGYPVDWGNCKYECMSDAYCKDLCVDRKAKSGYCYKLNWFCYCEGLPDDSPIKTNGHCR) folds into the LCN-type CS-alpha/beta domain. 4 disulfide bridges follow: C11-C59, C15-C35, C21-C42, and C25-C44.

Belongs to the long (4 C-C) scorpion toxin superfamily. Sodium channel inhibitor family. Alpha subfamily. As to expression, expressed by the venom gland.

The protein resides in the secreted. Functionally, alpha toxins bind voltage-independently at site-3 of sodium channels (Nav) and inhibits the inactivation of the activated channels, thereby blocking neuronal transmission. The polypeptide is Putative alpha-neurotoxin RjAa16 (Rhopalurus junceus (Caribbean blue scorpion)).